The sequence spans 179 residues: Large ribosomal subunit protein uL5 (179 aa).

It belongs to the universal ribosomal protein uL5 family. As to quaternary structure, part of the 50S ribosomal subunit; part of the 5S rRNA/L5/L18/L25 subcomplex. Contacts the 5S rRNA and the P site tRNA. Forms a bridge to the 30S subunit in the 70S ribosome.

This is one of the proteins that bind and probably mediate the attachment of the 5S RNA into the large ribosomal subunit, where it forms part of the central protuberance. In the 70S ribosome it contacts protein S13 of the 30S subunit (bridge B1b), connecting the 2 subunits; this bridge is implicated in subunit movement. Contacts the P site tRNA; the 5S rRNA and some of its associated proteins might help stabilize positioning of ribosome-bound tRNAs. This is Large ribosomal subunit protein uL5 from Enterobacter sp. (strain 638).